Here is a 442-residue protein sequence, read N- to C-terminus: Endothelin receptor type B (442 aa).

Positions 1 to 26 are cleaved as a signal peptide; that stretch reads MQPPPSLCGRALVALVLACGLSRIWG. Residues 27–101 lie on the Extracellular side of the membrane; it reads EERGFPPDRA…GPIEIKETFK (75 aa). A glycan (N-linked (GlcNAc...) asparagine) is linked at Asn59. The segment at 69 to 88 is disordered; it reads AEVPKGDRTAGSPPRTISPP. The chain crosses the membrane as a helical span at residues 102–126; the sequence is YINTVVSCLVFVLGIIGNSTLLRII. At 127-137 the chain is on the cytoplasmic side; the sequence is YKNKCMRNGPN. The chain crosses the membrane as a helical span at residues 138 to 163; that stretch reads ILIASLALGDLLHIVIDIPINVYKLL. Residues 164–175 lie on the Extracellular side of the membrane; it reads AEDWPFGAEMCK. Cys174 and Cys255 are oxidised to a cystine. The helical transmembrane segment at 176-197 threads the bilayer; that stretch reads LVPFIQKASVGITVLSLCALSI. At 198-218 the chain is on the cytoplasmic side; the sequence is DRYRAVASWSRIKGIGVPKWT. Residues 219–243 form a helical membrane-spanning segment; sequence AVEIVLIWVVSVVLAVPEAIGFDII. Residues 244–271 are Extracellular-facing; sequence TMDYKGSYLRICLLHPVQKTAFMQFYKT. The chain crosses the membrane as a helical span at residues 272–296; sequence AKDWWLFSFYFCLPLAITAFFYTLM. Residues 297-324 are Cytoplasmic-facing; sequence TCEMLRKKSGMQIALNDHLKQRREVAKT. Residue Ser305 is modified to Phosphoserine. A helical membrane pass occupies residues 325–350; that stretch reads VFCLVLVFALCWLPLHLSRILKLTLY. Topologically, residues 351–362 are extracellular; it reads NQNDPNRCELLS. The chain crosses the membrane as a helical span at residues 363–389; it reads FLLVLDYIGINMASLNSCINPIALYLV. Residues 390–442 are Cytoplasmic-facing; the sequence is SKRFKNCFKSCLCCWCQSFEEKQSLEEKQSCLKFKANDHGYDNFRSSNKYSSS. 3 S-palmitoyl cysteine lipidation sites follow: Cys402, Cys403, and Cys405. A Phosphoserine modification is found at Ser419. At Tyr439 the chain carries Phosphotyrosine. A phosphoserine mark is found at Ser440, Ser441, and Ser442.

It belongs to the G-protein coupled receptor 1 family. Endothelin receptor subfamily. EDNRB sub-subfamily. In terms of processing, palmitoylation of Cys-402 was confirmed by the palmitoylation of Cys-402 in a deletion mutant lacking both Cys-403 and Cys-405. As to expression, expressed in placental stem villi vessels, but not in cultured placental villi smooth muscle cells.

Its subcellular location is the cell membrane. In terms of biological role, non-specific receptor for endothelin 1, 2, and 3. Mediates its action by association with G proteins that activate a phosphatidylinositol-calcium second messenger system. This is Endothelin receptor type B from Homo sapiens (Human).